A 244-amino-acid chain; its full sequence is Capsid protein (244 aa).

The Bipartite nuclear localization signal motif lies at 1 to 24 (MSTSKRKRGDDSNWSKRVTKKKPS). The tract at residues 1 to 39 (MSTSKRKRGDDSNWSKRVTKKKPSSAGLKRAGSKADRPS) is disordered.

It belongs to the geminiviridae capsid protein family. In terms of assembly, homomultimer. Interacts with the movement protein. Binds to single-stranded and double-stranded viral DNA.

Its subcellular location is the virion. The protein localises to the host nucleus. In terms of biological role, encapsidates the viral genome into characteristic twinned ('geminate') particles. Binds the genomic viral ssDNA and shuttles it into and out of the cell nucleus. Plays a role in protection of the genome from degradation, virus acquisition and transmission by insect vectors, infectivity, and systemic movement. The CP of monopartite geminiviruses is absolutely essential for virus movement. The sequence is that of Capsid protein from Avena sativa (Oat).